The primary structure comprises 436 residues: Prenyltransferase nscD (436 aa).

Belongs to the tryptophan dimethylallyltransferase family.

It functions in the pathway secondary metabolite biosynthesis. In terms of biological role, prenyltransferase; part of the gene cluster that mediates the biosynthesis of neosartoricin B, a prenylated anthracenone that probably exhibits T-cell antiproliferative activity, suggestive of a physiological role as an immunosuppressive agent. The non-reducing polyketide synthase nscA probably synthesizes and cyclizes the decaketide backbone. The hydrolase nscB then mediates the product release through hydrolysis followed by spontaneous decarboxylation. The prenyltransferase nscD catalyzes the addition of the dimethylallyl group to the aromatic C5. The FAD-dependent monooxygenase nscC is then responsible for the stereospecific hydroxylation at C2. Neosartoricin B can be converted into two additional compounds neosartoricins C and D. Neosartoricin C is a spirocyclic compound that is cyclized through the attack of C3 hydroxyl on C14, followed by dehydration. On the other hand, neosartoricin D is a further cyclized compound in which attack of C2 on C14 in neosartoricin C results in the formation of the acetal-containing dioxabicyclo-octanone ring. Both of these compounds are novel and possibly represent related metabolites of the gene cluster. This chain is Prenyltransferase nscD, found in Trichophyton tonsurans (strain CBS 112818) (Scalp ringworm fungus).